We begin with the raw amino-acid sequence, 364 residues long: Long-wave-sensitive opsin 1 (364 aa).

The Extracellular segment spans residues 1 to 52 (MTQRWGPQRLAGGQPHAGLEDSTRASIFTYTNSNATRGPFEGPNYHIAPRWV). Residue serine 22 is glycosylated (O-linked (GlcNAc) serine). Asparagine 34 carries an N-linked (GlcNAc...) asparagine glycan. Residues 53–77 (YHVTSAWMIFVVIASVFTNGLVLAA) traverse the membrane as a helical segment. Residues 78-89 (TMKFKKLRHPLN) are Cytoplasmic-facing. A helical transmembrane segment spans residues 90–115 (WILVNLAVADLAETIIASTISVVNQI). The Extracellular portion of the chain corresponds to 116 to 129 (YGYFVLGHPMCVLE). Residues cysteine 126 and cysteine 203 are joined by a disulfide bond. The chain crosses the membrane as a helical span at residues 130–149 (GYTVSLCGITGLWSLAIISW). Residues 150-168 (ERWLVVCKPFGNVRFDAKL) lie on the Cytoplasmic side of the membrane. The helical transmembrane segment at 169 to 192 (AIAGIAFSWIWAAVWTAPPIFGWS) threads the bilayer. The Extracellular segment spans residues 193–218 (RYWPHGLKTSCGPDVFSGSSYPGVQS). Residues 219 to 246 (YMIVLMITCCIIPLSVIVLCYLQVWLAI) form a helical membrane-spanning segment. Residues 247–268 (RAVAKQQKESESTQKAEKEVTR) are Cytoplasmic-facing. The helical transmembrane segment at 269–292 (MVMVMIFAYCVCWGPYTFFACFAA) threads the bilayer. Topologically, residues 293-300 (AHPGYAFH) are extracellular. The chain crosses the membrane as a helical span at residues 301-325 (PLVAALPAYFAKSATIYNPIIYVFM). Residue lysine 312 is modified to N6-(retinylidene)lysine. At 326 to 364 (NRQFRNCIMQLFGKKVDDGSELSSASRTEASSVSSVSPA) the chain is on the cytoplasmic side.

The protein belongs to the G-protein coupled receptor 1 family. Opsin subfamily. In terms of processing, phosphorylated on some or all of the serine and threonine residues present in the C-terminal region. As to expression, the three color pigments are found in the cone photoreceptor cells. Expressed in retina.

The protein localises to the membrane. Its function is as follows. Visual pigments are the light-absorbing molecules that mediate vision. They consist of an apoprotein, opsin, covalently linked to cis-retinal. The protein is Long-wave-sensitive opsin 1 (OPN1LW) of Felis catus (Cat).